The primary structure comprises 353 residues: WAT1-related protein At3g28100 (353 aa).

10 consecutive transmembrane segments (helical) span residues alanine 12–phenylalanine 32, tyrosine 43–phenylalanine 63, isoleucine 81–tyrosine 101, threonine 105–phenylalanine 125, serine 137–tyrosine 157, tryptophan 187–leucine 207, phenylalanine 219–valine 239, phenylalanine 252–isoleucine 272, leucine 283–phenylalanine 303, and leucine 308–tryptophan 328. Residues glycine 27–valine 155 enclose the EamA domain.

It belongs to the drug/metabolite transporter (DMT) superfamily. Plant drug/metabolite exporter (P-DME) (TC 2.A.7.4) family.

It localises to the membrane. In Arabidopsis thaliana (Mouse-ear cress), this protein is WAT1-related protein At3g28100.